Consider the following 483-residue polypeptide: MKTLNRRDFPGAQYPERIIQFGEGNFLRAFVDWQIDLLNEHTDLNSGVVVVRPIETSFPPSLSTQDGLYTTIIRGLNEKGEAVSDARLIRSVNREISVYSEYDEFLKLAHNPEMRFVFSNTTEAGISYHAGDKFDDAPAVSYPAKLTRLLFERFSHFNGALDKGWIIIPCELIDYNGDALRELVLRYAQEWALPEAFIQWLDQANSFCSTLVDRIVTGYPRDEVAKLEEELGYHDGFLDTAEHFYLFVIQGPKSLATELRLDKYPLNVLIVDDIKPYKERKVAILNGAHTALVPVAFQAGLDTVGEAMNDAEICAFVEKAIYEEIIPVLDLPRDELESFASAVTGRFRNPYIKHQLLSIALNGMTKFRTRILPQLLAGQKANGTLPARLTFALAALIAFYRGERNGETYPVQDDAHWLERYQQLWSQHRDRVIGTQELVAIVLAEKDHWEQDLTQVPGLVEQVANDLDVILEKGMREAVRPLC.

18–29 (IIQFGEGNFLRA) is an NAD(+) binding site.

The protein belongs to the mannitol dehydrogenase family. UxaB subfamily.

It carries out the reaction D-altronate + NAD(+) = keto-D-tagaturonate + NADH + H(+). It functions in the pathway carbohydrate metabolism; pentose and glucuronate interconversion. This is Altronate oxidoreductase from Escherichia coli O17:K52:H18 (strain UMN026 / ExPEC).